The primary structure comprises 262 residues: uncharacterized protein (262 aa).

2 disordered regions span residues 1-30 (MGKKKFIENEDGTTEVQETESEAPKDKKEK) and 232-262 (EEEEVEDEADEETDVKEKVKEEEDEDEDMEE). Acidic residues-rich tracts occupy residues 9 to 21 (NEDGTTEVQETES), 232 to 245 (EEEEVEDEADEETD), and 253 to 262 (EEDEDEDMEE).

This is an uncharacterized protein from Caenorhabditis elegans.